The primary structure comprises 70 residues: Ribosome modulation factor (70 aa).

The protein belongs to the ribosome modulation factor family.

The protein resides in the cytoplasm. Its function is as follows. During stationary phase, converts 70S ribosomes to an inactive dimeric form (100S ribosomes). The polypeptide is Ribosome modulation factor (Marinobacter adhaerens (strain DSM 23420 / HP15)).